A 77-amino-acid polypeptide reads, in one-letter code: Cell division topological specificity factor (77 aa).

The protein belongs to the MinE family.

Its function is as follows. Prevents the cell division inhibition by proteins MinC and MinD at internal division sites while permitting inhibition at polar sites. This ensures cell division at the proper site by restricting the formation of a division septum at the midpoint of the long axis of the cell. This is Cell division topological specificity factor from Helicobacter acinonychis (strain Sheeba).